The chain runs to 837 residues: Protein translocase subunit SecA 1 (837 aa).

Residues Q85, 103-107, and D493 contribute to the ATP site; that span reads GEGKT. Residues C821, C823, C832, and H833 each coordinate Zn(2+).

This sequence belongs to the SecA family. As to quaternary structure, monomer and homodimer. Part of the essential Sec protein translocation apparatus which comprises SecA, SecYEG and auxiliary proteins SecDF. Other proteins may also be involved. Zn(2+) is required as a cofactor.

Its subcellular location is the cell membrane. The protein localises to the cytoplasm. The enzyme catalyses ATP + H2O + cellular proteinSide 1 = ADP + phosphate + cellular proteinSide 2.. Part of the Sec protein translocase complex. Interacts with the SecYEG preprotein conducting channel. Has a central role in coupling the hydrolysis of ATP to the transfer of proteins into and across the cell membrane, serving as an ATP-driven molecular motor driving the stepwise translocation of polypeptide chains across the membrane. The protein is Protein translocase subunit SecA 1 of Streptococcus pneumoniae serotype 4 (strain ATCC BAA-334 / TIGR4).